The primary structure comprises 409 residues: TM2 domain-containing protein ZK858.5 (409 aa).

A TM2 domain is found at 8–55 (VKPWIVRIILIVGGLFGAHRLYLKQVPEAFVFFSTLGVLLIGWLYDSF). 6 helical membrane-spanning segments follow: residues 10 to 30 (PWIVRIILIVGGLFGAHRLYL), 37 to 57 (FVFFSTLGVLLIGWLYDSFMF), 104 to 124 (VLYGSYIGLATWLACTVTFGW), 127 to 147 (INLIPFICVVALGITAGIYII), 168 to 190 (MFIMVRLAQTTVFRAIFLTAIVS), and 209 to 229 (HFLFWSSLFLMLVCVILLGCS).

This sequence belongs to the TM2 family.

It is found in the membrane. This is TM2 domain-containing protein ZK858.5 from Caenorhabditis elegans.